The primary structure comprises 119 residues: MINNTNSNISIKAVGKKIRISPHKMRKVIDQIRGRSYEQALMILEFMPYKACNYVLKLLSSVAANANHNFGLNKSDLFIEKIIADGGPKLKRFQPRAQGRGYPILKPTCNLMIVVKVKS.

This sequence belongs to the universal ribosomal protein uL22 family. As to quaternary structure, part of the 50S ribosomal subunit.

It is found in the plastid. Its subcellular location is the chloroplast. Functionally, this protein binds specifically to 23S rRNA. In terms of biological role, the globular domain of the protein is located near the polypeptide exit tunnel on the outside of the subunit, while an extended beta-hairpin is found that lines the wall of the exit tunnel in the center of the 70S ribosome. This is Large ribosomal subunit protein uL22c (rpl22) from Chaetosphaeridium globosum (Charophycean green alga).